A 405-amino-acid polypeptide reads, in one-letter code: Nuclear hormone receptor family member nhr-199 (405 aa).

A DNA-binding region (nuclear receptor) is located at residues 20–111; it reads IPYCLICSEV…MGMQRSSVQQ (92 aa). 2 NR C4-type zinc fingers span residues 23–44 and 60–94; these read CLIC…CRAC and CGRN…CKAC. Residues 126-376 form the NR LBD domain; sequence RGKPVLNKLR…PFSRIHGNQK (251 aa).

It belongs to the nuclear hormone receptor family.

It is found in the nucleus. Its function is as follows. Orphan nuclear receptor. This Caenorhabditis elegans protein is Nuclear hormone receptor family member nhr-199 (nhr-199).